Consider the following 485-residue polypeptide: Cobyric acid synthase (485 aa).

Positions 250 to 436 (RRIVACPILP…IHGLLASPAL (187 aa)) constitute a GATase cobBQ-type domain. The active-site Nucleophile is the cysteine 332. The active site involves histidine 428.

The protein belongs to the CobB/CobQ family. CobQ subfamily.

The protein operates within cofactor biosynthesis; adenosylcobalamin biosynthesis. Catalyzes amidations at positions B, D, E, and G on adenosylcobyrinic A,C-diamide. NH(2) groups are provided by glutamine, and one molecule of ATP is hydrogenolyzed for each amidation. This chain is Cobyric acid synthase, found in Sphingopyxis alaskensis (strain DSM 13593 / LMG 18877 / RB2256) (Sphingomonas alaskensis).